Consider the following 165-residue polypeptide: Cyanate hydratase (165 aa).

Residues 1–20 (MAQNKANTVSQLQSLKNKSG) form a disordered region. Active-site residues include Arg90, Glu93, and Ser116.

The protein belongs to the cyanase family.

The catalysed reaction is cyanate + hydrogencarbonate + 3 H(+) = NH4(+) + 2 CO2. In terms of biological role, catalyzes the reaction of cyanate with bicarbonate to produce ammonia and carbon dioxide. In Medicago truncatula (Barrel medic), this protein is Cyanate hydratase.